Consider the following 164-residue polypeptide: Large ribosomal subunit protein uL10 (164 aa).

It belongs to the universal ribosomal protein uL10 family. Part of the ribosomal stalk of the 50S ribosomal subunit. The N-terminus interacts with L11 and the large rRNA to form the base of the stalk. The C-terminus forms an elongated spine to which L12 dimers bind in a sequential fashion forming a multimeric L10(L12)X complex.

Its function is as follows. Forms part of the ribosomal stalk, playing a central role in the interaction of the ribosome with GTP-bound translation factors. The sequence is that of Large ribosomal subunit protein uL10 from Aliivibrio salmonicida (strain LFI1238) (Vibrio salmonicida (strain LFI1238)).